The sequence spans 545 residues: Esterase-5B (545 aa).

The first 19 residues, 1–19 (MYCEKLILLLGCFWISSSA), serve as a signal peptide directing secretion. A disulfide bond links Cys84 and Cys103. Residue Asn113 is glycosylated (N-linked (GlcNAc...) asparagine). Ser207 acts as the Acyl-ester intermediate in catalysis. A disulfide bridge links Cys259 with Cys271. An N-linked (GlcNAc...) asparagine glycan is attached at Asn421. The Charge relay system role is filled by His467. An N-linked (GlcNAc...) asparagine glycan is attached at Asn507. A disulfide bridge connects residues Cys515 and Cys536.

This sequence belongs to the type-B carboxylesterase/lipase family. As to quaternary structure, homodimer.

Its subcellular location is the secreted. It carries out the reaction a carboxylic ester + H2O = an alcohol + a carboxylate + H(+). The protein is Esterase-5B (Est-5B) of Drosophila miranda (Fruit fly).